The chain runs to 414 residues: Protein phosphatase 2C homolog 3 (414 aa).

The PPM-type phosphatase domain maps to 23–288 (LYGLSSMQGW…DNMTVCIVAL (266 aa)). The Mn(2+) site is built by D62, G63, D230, and D279. Disordered stretches follow at residues 313–368 (APPE…TNGS) and 380–414 (FPHK…SAAD). Positions 350 to 363 (GYDKDANENSKEDD) are enriched in basic and acidic residues. The segment covering 390 to 400 (SSETDIVNSNK) has biased composition (polar residues). A compositionally biased stretch (basic and acidic residues) spans 401–414 (DVADDHKEAVSAAD).

The protein belongs to the PP2C family. Monomer. It depends on Mg(2+) as a cofactor. Mn(2+) is required as a cofactor.

It localises to the cytoplasm. Its subcellular location is the nucleus. It catalyses the reaction O-phospho-L-seryl-[protein] + H2O = L-seryl-[protein] + phosphate. The enzyme catalyses O-phospho-L-threonyl-[protein] + H2O = L-threonyl-[protein] + phosphate. Functionally, dephosphorylating regulator for many key proteins. Has an important role in osmotic stability and cell shape control. It may negatively regulate the osmosensing signal transmitted through wis1 map kinase. The chain is Protein phosphatase 2C homolog 3 (ptc3) from Schizosaccharomyces pombe (strain 972 / ATCC 24843) (Fission yeast).